Reading from the N-terminus, the 336-residue chain is Dihydroorotate dehydrogenase (quinone) (336 aa).

FMN-binding positions include 62-66 and Thr86; that span reads AGLDK. Residue Lys66 coordinates substrate. A substrate-binding site is contributed by 111–115; sequence NRMGF. 2 residues coordinate FMN: Asn139 and Asn172. Asn172 is a binding site for substrate. Residue Ser175 is the Nucleophile of the active site. Asn177 lines the substrate pocket. FMN-binding residues include Lys217 and Thr245. Substrate is bound at residue 246-247; it reads NT. FMN contacts are provided by residues Gly268, Gly297, and 318 to 319; that span reads YS.

The protein belongs to the dihydroorotate dehydrogenase family. Type 2 subfamily. As to quaternary structure, monomer. Requires FMN as cofactor.

Its subcellular location is the cell membrane. It carries out the reaction (S)-dihydroorotate + a quinone = orotate + a quinol. The protein operates within pyrimidine metabolism; UMP biosynthesis via de novo pathway; orotate from (S)-dihydroorotate (quinone route): step 1/1. Catalyzes the conversion of dihydroorotate to orotate with quinone as electron acceptor. The polypeptide is Dihydroorotate dehydrogenase (quinone) (Vibrio vulnificus (strain YJ016)).